The sequence spans 466 residues: Adenosylhomocysteinase (466 aa).

Residues threonine 57, aspartate 132, and glutamate 192 each coordinate substrate. Residue 193–195 (TTT) coordinates NAD(+). Substrate-binding residues include lysine 222 and aspartate 226. NAD(+) is bound by residues asparagine 227, 256–261 (GYGDVG), glutamate 279, asparagine 314, 335–337 (IGH), and asparagine 380.

The protein belongs to the adenosylhomocysteinase family. NAD(+) is required as a cofactor.

It localises to the cytoplasm. The catalysed reaction is S-adenosyl-L-homocysteine + H2O = L-homocysteine + adenosine. It participates in amino-acid biosynthesis; L-homocysteine biosynthesis; L-homocysteine from S-adenosyl-L-homocysteine: step 1/1. Functionally, may play a key role in the regulation of the intracellular concentration of adenosylhomocysteine. The protein is Adenosylhomocysteinase of Sinorhizobium medicae (strain WSM419) (Ensifer medicae).